A 437-amino-acid chain; its full sequence is Trigger factor (437 aa).

The PPIase FKBP-type domain maps to glycine 163 to proline 248.

Belongs to the FKBP-type PPIase family. Tig subfamily.

The protein resides in the cytoplasm. It carries out the reaction [protein]-peptidylproline (omega=180) = [protein]-peptidylproline (omega=0). In terms of biological role, involved in protein export. Acts as a chaperone by maintaining the newly synthesized protein in an open conformation. Functions as a peptidyl-prolyl cis-trans isomerase. This is Trigger factor from Pelobacter propionicus (strain DSM 2379 / NBRC 103807 / OttBd1).